We begin with the raw amino-acid sequence, 528 residues long: T-complex protein 1 subunit gamma (528 aa).

S250 is subject to Phosphoserine. C364 and C370 form a disulfide bridge.

This sequence belongs to the TCP-1 chaperonin family. As to quaternary structure, heterooligomeric complex of about 850 to 900 kDa that forms two stacked rings, 12 to 16 nm in diameter.

It is found in the cytoplasm. Functionally, molecular chaperone; assists the folding of proteins upon ATP hydrolysis. Known to play a role, in vitro, in the folding of actin and tubulin. In Schizosaccharomyces pombe (strain 972 / ATCC 24843) (Fission yeast), this protein is T-complex protein 1 subunit gamma (cct3).